A 378-amino-acid chain; its full sequence is Erythronate-4-phosphate dehydrogenase (378 aa).

Residues Ser-45 and Thr-66 each contribute to the substrate site. Residues Asp-142 and Thr-169 each coordinate NAD(+). The active site involves Arg-202. Residue Asp-226 participates in NAD(+) binding. The active site involves Glu-231. His-248 (proton donor) is an active-site residue. Gly-251 is a binding site for NAD(+). Tyr-252 contacts substrate.

This sequence belongs to the D-isomer specific 2-hydroxyacid dehydrogenase family. PdxB subfamily. In terms of assembly, homodimer.

It localises to the cytoplasm. The catalysed reaction is 4-phospho-D-erythronate + NAD(+) = (R)-3-hydroxy-2-oxo-4-phosphooxybutanoate + NADH + H(+). It participates in cofactor biosynthesis; pyridoxine 5'-phosphate biosynthesis; pyridoxine 5'-phosphate from D-erythrose 4-phosphate: step 2/5. Its function is as follows. Catalyzes the oxidation of erythronate-4-phosphate to 3-hydroxy-2-oxo-4-phosphonooxybutanoate. The chain is Erythronate-4-phosphate dehydrogenase from Cellvibrio japonicus (strain Ueda107) (Pseudomonas fluorescens subsp. cellulosa).